Reading from the N-terminus, the 272-residue chain is Low-density lipoprotein receptor class A domain-containing protein 2 (272 aa).

A signal peptide spans 1 to 25 (MEACCLLQLPQRLLLLGAAALTATA). Topologically, residues 26-233 (LETADLAELC…GSTDAHTSRS (208 aa)) are extracellular. The N-linked (GlcNAc...) asparagine glycan is linked to asparagine 97. Residues 172-214 (PCGAYFRCQNGRCIPSSLVCDPWGMDNCGDGSDQGSWSPADCR) enclose the LDL-receptor class A domain. 3 cysteine pairs are disulfide-bonded: cysteine 173/cysteine 184, cysteine 179/cysteine 199, and cysteine 191/cysteine 213. Positions 202-272 (GSDQGSWSPA…QDAALEGSTE (71 aa)) are disordered. Polar residues predominate over residues 220-236 (PSQTGSTDAHTSRSLTP). The chain crosses the membrane as a helical span at residues 234-250 (LTPSPALGSAGSLWIAA). Residues 251–272 (ERSSPAGRDPTRQDAALEGSTE) lie on the Cytoplasmic side of the membrane.

Belongs to the LDLR family.

It localises to the membrane. This Homo sapiens (Human) protein is Low-density lipoprotein receptor class A domain-containing protein 2 (LDLRAD2).